A 502-amino-acid polypeptide reads, in one-letter code: Actin-binding protein WASF3 (502 aa).

A coiled-coil region spans residues 57 to 93; the sequence is NEANNFYIRANSLQDRIDRLAVKVTQLDSTVEEVSLQ. Tyr151 carries the post-translational modification Phosphotyrosine; by ABL1. Positions 162–206 form a coiled coil; sequence KEKMLQDTEDKRKEKRRQKEQKRIDGTTREVKKVRKARNRRQEWN. Disordered stretches follow at residues 169–210 and 223–443; these read TEDK…MMAY and SVYH…ARSD. A compositionally biased stretch (basic and acidic residues) spans 182–192; that stretch reads QKRIDGTTREV. A compositionally biased stretch (polar residues) spans 223–237; sequence SVYHGASSEGSLSPD. Tyr248 carries the post-translational modification Phosphotyrosine; by ABL1. Over residues 302-312 the composition is skewed to pro residues; that stretch reads QQPPPPPPPQA. Tyr337 carries the post-translational modification Phosphotyrosine; by ABL1. 2 stretches are compositionally biased toward pro residues: residues 341-352 and 394-410; these read SGPPPPPPPPVI and APPP…PPGP. Residues 411–423 are compositionally biased toward low complexity; sequence GSSLSSSPMHGPP. Residues 440–457 form the WH2 domain; that stretch reads ARSDLLAAIRMGIQLKKV. Position 486 is a phosphotyrosine; by ABL1 (Tyr486).

It belongs to the SCAR/WAVE family. As to quaternary structure, binds actin and the Arp2/3 complex. In terms of processing, phosphorylation by ABL1 promotes lamellipodia formation and cell migration. Expressed in ovary and brain.

It localises to the cytoplasm. Its subcellular location is the cytoskeleton. In terms of biological role, downstream effector molecules involved in the transmission of signals from tyrosine kinase receptors and small GTPases to the actin cytoskeleton. Plays a role in the regulation of cell morphology and cytoskeletal organization. Required in the control of cell shape. In Homo sapiens (Human), this protein is Actin-binding protein WASF3 (WASF3).